Here is a 479-residue protein sequence, read N- to C-terminus: MNYLPIFLDLRDRHCLVVGGSETAARKAELLLRAGAHVAVAAPALHAGFEQLPDRQRLTRVADTFSPALLDGKDAVIVVEDDAAAAQIVADAARARHLPVNVADKPALCSFILPSIIDRSPIMVAVSSGGESPVLARLLRARLETLIPAAYGRLSALASRYKARVREAIQPGQRRAFWEKVFLSSVAEMVFSGRDSEAEAQLEAMIKDSAAHEPARGEVYLVGAGPGNPDLLTFRALRLMQQADVVVYDRLVSQPILDMCRRDAERIYVGKERDDHAVPQEEINMMLVRLAKEGKRTLRLKGGDPFIFGRGGEEIETLVEHGVAFQVVPGITAAAGVASYAGIPLTHRDYAQSVAFVTGHLKENTFNMNWEGIARRDQTIVIYMGLKGLPMLCEALIKHGLTADTPAAIVQHGTLPTQRVITGTLATLPTLAVEAGLKAPTLIIVGNVVKLREKLAWYRPQAAGEAAAATPLEAPDHLA.

The segment at 1 to 202 (MNYLPIFLDL…GRDSEAEAQL (202 aa)) is precorrin-2 dehydrogenase /sirohydrochlorin ferrochelatase. NAD(+) contacts are provided by residues 22–23 (ET) and 43–44 (PA). Ser-128 is subject to Phosphoserine. The uroporphyrinogen-III C-methyltransferase stretch occupies residues 217 to 479 (GEVYLVGAGP…TPLEAPDHLA (263 aa)). Pro-226 is a binding site for S-adenosyl-L-methionine. Catalysis depends on Asp-249, which acts as the Proton acceptor. The active-site Proton donor is Lys-271. Residues 302-304 (GGD), Ile-307, 332-333 (TA), Met-384, and Gly-413 each bind S-adenosyl-L-methionine.

It in the N-terminal section; belongs to the precorrin-2 dehydrogenase / sirohydrochlorin ferrochelatase family. This sequence in the C-terminal section; belongs to the precorrin methyltransferase family.

The catalysed reaction is uroporphyrinogen III + 2 S-adenosyl-L-methionine = precorrin-2 + 2 S-adenosyl-L-homocysteine + H(+). The enzyme catalyses precorrin-2 + NAD(+) = sirohydrochlorin + NADH + 2 H(+). It catalyses the reaction siroheme + 2 H(+) = sirohydrochlorin + Fe(2+). Its pathway is cofactor biosynthesis; adenosylcobalamin biosynthesis; precorrin-2 from uroporphyrinogen III: step 1/1. It participates in cofactor biosynthesis; adenosylcobalamin biosynthesis; sirohydrochlorin from precorrin-2: step 1/1. The protein operates within porphyrin-containing compound metabolism; siroheme biosynthesis; precorrin-2 from uroporphyrinogen III: step 1/1. It functions in the pathway porphyrin-containing compound metabolism; siroheme biosynthesis; siroheme from sirohydrochlorin: step 1/1. Its pathway is porphyrin-containing compound metabolism; siroheme biosynthesis; sirohydrochlorin from precorrin-2: step 1/1. Its function is as follows. Multifunctional enzyme that catalyzes the SAM-dependent methylations of uroporphyrinogen III at position C-2 and C-7 to form precorrin-2 via precorrin-1. Then it catalyzes the NAD-dependent ring dehydrogenation of precorrin-2 to yield sirohydrochlorin. Finally, it catalyzes the ferrochelation of sirohydrochlorin to yield siroheme. The chain is Siroheme synthase from Thiobacillus denitrificans (strain ATCC 25259 / T1).